A 1039-amino-acid chain; its full sequence is uncharacterized protein (1039 aa).

Basic residues predominate over residues Met-1–Asn-19. Residues Met-1–His-38 form a disordered region.

This is an uncharacterized protein from Sinorhizobium fredii (strain NBRC 101917 / NGR234).